The following is a 207-amino-acid chain: Dephospho-CoA kinase (207 aa).

One can recognise a DPCK domain in the interval 5 to 203 (AVGLTGGVAC…ARYRALASVF (199 aa)). Residue 13-18 (ACGKSL) participates in ATP binding.

It belongs to the CoaE family.

It localises to the cytoplasm. The catalysed reaction is 3'-dephospho-CoA + ATP = ADP + CoA + H(+). It participates in cofactor biosynthesis; coenzyme A biosynthesis; CoA from (R)-pantothenate: step 5/5. Catalyzes the phosphorylation of the 3'-hydroxyl group of dephosphocoenzyme A to form coenzyme A. This is Dephospho-CoA kinase from Xylella fastidiosa (strain Temecula1 / ATCC 700964).